A 555-amino-acid chain; its full sequence is Glucosylglycerate phosphorylase (555 aa).

D231 serves as the catalytic Nucleophile.

Belongs to the glycosyl hydrolase 13 family. Glucosylglycerate phosphorylase subfamily.

The catalysed reaction is (2R)-2-O-(alpha-D-glucopyranosyl)-glycerate + phosphate = (R)-glycerate + alpha-D-glucose 1-phosphate. Functionally, catalyzes the reversible phosphorolysis of glucosylglycerate into alpha-D-glucose 1-phosphate (Glc1P) and D-glycerate. May be a regulator of intracellular levels of glucosylglycerate, a compatible solute that primarily protects organisms facing salt stress and very specific nutritional constraints. Has a very strict substrate specificity. Cannot catalyze the phosphorolysis of sucrose or synthesize sucrose from Glc1P and D-fructose. This is Glucosylglycerate phosphorylase from Allomeiothermus silvanus (strain ATCC 700542 / DSM 9946 / NBRC 106475 / NCIMB 13440 / VI-R2) (Thermus silvanus).